Reading from the N-terminus, the 90-residue chain is Progonadoliberin-3 (90 aa).

Residues Met1–Cys23 form the signal peptide. Gln24 is modified (pyrrolidone carboxylic acid). Gly33 carries the post-translational modification Glycine amide.

It belongs to the GnRH family. Expressed in neuron cell bodies of the nucleus olfactoretinalis.

The protein localises to the secreted. Stimulates the secretion of gonadotropins. The protein is Progonadoliberin-3 (gnrh3) of Oryzias latipes (Japanese rice fish).